Consider the following 940-residue polypeptide: Testis-expressed protein 11 (940 aa).

The protein belongs to the SPO22 family. In terms of assembly, interacts with SYCP2. Interacts with PBXIP1; may prevent interaction between PBXIP1 and ESR2. Interacts with SHOC1. Interacts with REDIC1. As to expression, testis-specific. Not expressed in adult ovaries.

It is found in the chromosome. Regulator of crossing-over during meiosis. Involved in initiation and/or maintenance of chromosome synapsis and formation of crossovers. The polypeptide is Testis-expressed protein 11 (TEX11) (Homo sapiens (Human)).